A 402-amino-acid chain; its full sequence is Serine/threonine-protein phosphatase 4 regulatory subunit 2 (402 aa).

The segment at 258–402 is disordered; sequence NEDQDDENTG…FSKRNKASES (145 aa). Over residues 266 to 277 the composition is skewed to polar residues; the sequence is TGFSNQVINDNN. Over residues 278–319 the composition is skewed to acidic residues; that stretch reads DSQEDDDEDSDYIEEDEGDEDEDDDDDEEEEEEEDGDEDEDE. The span at 320–337 shows a compositional bias: basic and acidic residues; it reads DKHFDIKVEEEAVKEDAN. Over residues 345–358 the composition is skewed to low complexity; sequence NVSNNSDDSSLQND.

This sequence belongs to the PPP4R2 family. In terms of assembly, regulatory subunit (R2) of the histone H2A phosphatase complex (HTP-C) consisting of PPH3, PSY2 and PSY4.

It is found in the nucleus. Regulatory subunit of the histone H2A phosphatase complex, which dephosphorylates H2AS128ph (gamma-H2A) that has been displaced from sites of DNA lesions in the double-stranded DNA break repair process. Dephosphorylation is necessary for efficient recovery from the DNA damage checkpoint. In Candida glabrata (strain ATCC 2001 / BCRC 20586 / JCM 3761 / NBRC 0622 / NRRL Y-65 / CBS 138) (Yeast), this protein is Serine/threonine-protein phosphatase 4 regulatory subunit 2 (PSY4).